The primary structure comprises 177 residues: Acetyltransferase (177 aa).

In terms of domain architecture, N-acetyltransferase spans 4 to 174; it reads AQLRRVTAES…PTAIYFKTLG (171 aa). Acetyl-CoA contacts are provided by residues glutamate 27, 96–98, 104–109, 130–131, and tyrosine 141; these read LMV, GRGLGR, and DT.

In terms of biological role, renders tabtoxin-producing pathogens tolerant to their own phytotoxins. This chain is Acetyltransferase (ttr), found in Pseudomonas amygdali pv. tabaci (Pseudomonas syringae pv. tabaci).